The chain runs to 76 residues: UPF0291 protein BCE_1981 (76 aa).

It belongs to the UPF0291 family.

It is found in the cytoplasm. In Bacillus cereus (strain ATCC 10987 / NRS 248), this protein is UPF0291 protein BCE_1981.